The chain runs to 396 residues: Purine ribonucleoside efflux pump NepI (396 aa).

Topologically, residues Met1–Ala21 are cytoplasmic. A helical membrane pass occupies residues Val22–Leu42. The Periplasmic segment spans residues Leu43–Glu54. A helical transmembrane segment spans residues Gly55–Ile75. Topologically, residues Thr76–Arg85 are cytoplasmic. The chain crosses the membrane as a helical span at residues Tyr86–Asn106. Residue Ser107 is a topological domain, periplasmic. A helical membrane pass occupies residues Phe108–Met128. Residues Ser129–Ser147 lie on the Cytoplasmic side of the membrane. The helical transmembrane segment at Val148–Gly168 threads the bilayer. Topologically, residues Glu169 to Asn175 are periplasmic. Residues Val176–Pro196 form a helical membrane-spanning segment. Residues Ser197–Arg215 lie on the Cytoplasmic side of the membrane. A helical transmembrane segment spans residues Pro216 to Phe236. Residues Thr237 to Thr255 lie on the Periplasmic side of the membrane. A helical membrane pass occupies residues Leu256–Leu276. Residues Lys277 to Lys281 lie on the Cytoplasmic side of the membrane. Residues Leu282–Gly302 traverse the membrane as a helical segment. Residues Ser303–Lys305 are Periplasmic-facing. Residues Ile306–Trp326 form a helical membrane-spanning segment. The Cytoplasmic segment spans residues Ser327–Ser343. Residues Ile344–Leu364 form a helical membrane-spanning segment. Over Asp365–Asn366 the chain is Periplasmic. The chain crosses the membrane as a helical span at residues Ile367–Val387. Topologically, residues Thr388 to Ser396 are cytoplasmic.

The protein belongs to the major facilitator superfamily. DHA1 family. NepI (TC 2.A.1.2.26) subfamily.

Its subcellular location is the cell inner membrane. The enzyme catalyses inosine(in) + H(+)(out) = inosine(out) + H(+)(in). It carries out the reaction guanosine(in) + H(+)(out) = guanosine(out) + H(+)(in). Functionally, involved in the efflux of purine ribonucleosides, such as inosine and guanosine. The sequence is that of Purine ribonucleoside efflux pump NepI from Escherichia coli O6:H1 (strain CFT073 / ATCC 700928 / UPEC).